We begin with the raw amino-acid sequence, 322 residues long: Malate dehydrogenase (322 aa).

Residues G10–G15 and D34 each bind NAD(+). Substrate is bound by residues R83 and R89. Residues N96 and I119–N121 contribute to the NAD(+) site. The substrate site is built by N121 and R152. The active-site Proton acceptor is the H176.

The protein belongs to the LDH/MDH superfamily. MDH type 3 family.

The catalysed reaction is (S)-malate + NAD(+) = oxaloacetate + NADH + H(+). Functionally, catalyzes the reversible oxidation of malate to oxaloacetate. The protein is Malate dehydrogenase of Bradyrhizobium sp. (strain ORS 278).